An 819-amino-acid polypeptide reads, in one-letter code: Protein kinase C-binding protein NELL2 (819 aa).

The signal sequence occupies residues 1–24; that stretch reads MHAMESRVLLRTFCVILGLEAVWG. Residues asparagine 56, asparagine 228, asparagine 296, and asparagine 301 are each glycosylated (N-linked (GlcNAc...) asparagine). The Laminin G-like domain occupies 58–231; it reads TKAFLFQDSP…AQCPDLNRTC (174 aa). The region spanning 275-334 is the VWFC 1 domain; sequence RTCTMKGTTYREFESWTDGCKNCTCLNGTIQCETLVCPAPDCPAKSAPAYVDGKCCKECK. Residues 400 to 442 enclose the EGF-like 1 domain; the sequence is GYDFCSEKHTCMENSVCRNLNDRAVCSCRDGFRALREDNAYCE. Cystine bridges form between cysteine 404–cysteine 416, cysteine 410–cysteine 425, and cysteine 427–cysteine 441. Ca(2+) contacts are provided by aspartate 443, isoleucine 444, and glutamate 446. In terms of domain architecture, EGF-like 2; calcium-binding spans 443 to 484; it reads DIDECAEGRHYCRENTMCVNTPGSFLCICQTGYIRIDDYSCT. 9 cysteine pairs are disulfide-bonded: cysteine 447/cysteine 460, cysteine 454/cysteine 469, cysteine 471/cysteine 483, cysteine 489/cysteine 502, cysteine 496/cysteine 511, cysteine 513/cysteine 524, cysteine 528/cysteine 538, cysteine 532/cysteine 544, and cysteine 546/cysteine 555. Residues asparagine 462, threonine 463, and serine 466 each contribute to the Ca(2+) site. The EGF-like 3; calcium-binding domain occupies 485-525; the sequence is EHDECLTNQHNCDENALCFNTVGGHNCVCKPGYTGNGTTCK. Asparagine 520 carries an N-linked (GlcNAc...) asparagine glycan. In terms of domain architecture, EGF-like 4 spans 526-556; sequence AFCKDGCRNGGACIAANVCACPQGFTGPSCE. Threonine 551 carries an O-linked (GlcNAc...) threonine glycan. Aspartate 558, isoleucine 559, and glutamate 561 together coordinate Ca(2+). Residues 558–604 form the EGF-like 5; calcium-binding domain; that stretch reads DIDECSEGFVQCDSRANCINLPGWYHCECRDGYHDNGMFAPGGESCE. Disulfide bonds link cysteine 562–cysteine 575, cysteine 569–cysteine 584, and cysteine 586–cysteine 603. 3 residues coordinate Ca(2+): asparagine 577, leucine 578, and tryptophan 581. Ca(2+) contacts are provided by aspartate 605, isoleucine 606, and glutamate 608. The EGF-like 6; calcium-binding domain maps to 605 to 640; sequence DIDECGTGRHSCANDTICFNLDGGYDCRCPHGKNCT. 3 cysteine pairs are disulfide-bonded: cysteine 609/cysteine 622, cysteine 616/cysteine 631, and cysteine 633/cysteine 639. The N-linked (GlcNAc...) asparagine glycan is linked to asparagine 618. 3 residues coordinate Ca(2+): asparagine 624, leucine 625, and glycine 628. The N-linked (GlcNAc...) asparagine glycan is linked to asparagine 638. 2 VWFC domains span residues 641-696 and 701-759; these read GDCV…PECD and SQCL…PRCV.

As to quaternary structure, homotrimer. Binds to PRKCB. Interacts with NICOL1; this interaction triggers epididymal differentiation. In terms of assembly, binds to PRKCB. Widely expressed. Expressed in cortical astrocytes but not in neuron. As to expression, widely expressed in brain. High expression is observed in telencephalic and diencephalic glutamatergic neurons, while no expression is found in GABAergic and GNRH neurons.

It is found in the secreted. The protein localises to the cytoplasm. Its function is as follows. Plays multiple roles In neural tissues, regulates neuronal proliferation, survival, differentiation, polarization, as well as axon guidance and synaptic functions. Plays an important role in axon development during neuronal differentiation through the MAPK intracellular signaling pathway. Via binding to its receptor ROBO3, plays a role in axon guidance, functioning as a repulsive axon guidance cue that contributes to commissural axon guidance to the midline. Required for neuron survival through the modulation of MAPK signaling pathways too. Involved in the regulation of hypothalamic GNRH secretion and the control of puberty. Functionally, epididymal-secreted protein that signals through a ROS1-pathway to regulate the epididymal initial segment (IS) maturation, sperm maturation and male fertility. Acts as an endogenous inhibitor of PRKCB in glia. This Rattus norvegicus (Rat) protein is Protein kinase C-binding protein NELL2 (Nell2).